The primary structure comprises 508 residues: Photosystem II CP47 reaction center protein (508 aa).

Helical transmembrane passes span 21-36 (AVHI…WAGS), 101-115 (IVFS…IWHW), 140-156 (GIHL…FGAF), 203-218 (IAAG…FHLS), 237-252 (VLSS…AFVV), and 457-472 (TFAL…HGAR).

Belongs to the PsbB/PsbC family. PsbB subfamily. As to quaternary structure, PSII is composed of 1 copy each of membrane proteins PsbA, PsbB, PsbC, PsbD, PsbE, PsbF, PsbH, PsbI, PsbJ, PsbK, PsbL, PsbM, PsbT, PsbX, PsbY, PsbZ, Psb30/Ycf12, at least 3 peripheral proteins of the oxygen-evolving complex and a large number of cofactors. It forms dimeric complexes. It depends on Binds multiple chlorophylls. PSII binds additional chlorophylls, carotenoids and specific lipids. as a cofactor.

It is found in the plastid. The protein resides in the chloroplast thylakoid membrane. In terms of biological role, one of the components of the core complex of photosystem II (PSII). It binds chlorophyll and helps catalyze the primary light-induced photochemical processes of PSII. PSII is a light-driven water:plastoquinone oxidoreductase, using light energy to abstract electrons from H(2)O, generating O(2) and a proton gradient subsequently used for ATP formation. This chain is Photosystem II CP47 reaction center protein, found in Secale cereale (Rye).